Reading from the N-terminus, the 337-residue chain is Heme A synthase (337 aa).

Transmembrane regions (helical) follow at residues 6–26, 87–107, 119–139, 154–174, and 192–212; these read ITKWLCISCIMVIATLVIGGI, FIHRLLGRITALIYIVPLIYF, LPYIIALLLFCVQGFIGWYMV, LAFHLIIAVIIYHILFYQLIK, and LIFSGIAITVVYVQIFLGALV. His256 serves as a coordination point for heme. Helical transmembrane passes span 258-278, 285-305, and 308-328; these read LVGYSVFLVVVVLISCLLKIE, IAYFLMIALFMQVSTGILTLL, and VPIIIASIHQLFAIILLSIII. Residue His316 participates in heme binding.

Belongs to the COX15/CtaA family. Type 2 subfamily. In terms of assembly, interacts with CtaB. It depends on heme b as a cofactor.

The protein resides in the cell membrane. It catalyses the reaction Fe(II)-heme o + 2 A + H2O = Fe(II)-heme a + 2 AH2. Its pathway is porphyrin-containing compound metabolism; heme A biosynthesis; heme A from heme O: step 1/1. Functionally, catalyzes the conversion of heme O to heme A by two successive hydroxylations of the methyl group at C8. The first hydroxylation forms heme I, the second hydroxylation results in an unstable dihydroxymethyl group, which spontaneously dehydrates, resulting in the formyl group of heme A. This is Heme A synthase from Rickettsia conorii (strain ATCC VR-613 / Malish 7).